A 217-amino-acid chain; its full sequence is MTQISPTRLHSPLDRLLVEAQRALDTVFGNPPAERPNPAADTPDVVLDPEQRRHAAGLMRINHVGEVCAQGLYFGQAAVARDAHTQHHLLEAAQEETDHLAWCADRLHELDSRPSLFNPVWYAGSYALGALAGLRGDDWSLGFVVETERQVEAHLDEHLETLPQNDQRSRAILRVMKIDEARHADQAEQAGARPLPAPIPSAMALASKLMKTVAYRL.

Fe cation contacts are provided by glutamate 66, glutamate 96, histidine 99, glutamate 148, glutamate 180, and histidine 183.

It belongs to the COQ7 family. The cofactor is Fe cation.

The protein resides in the cell membrane. It carries out the reaction a 5-methoxy-2-methyl-3-(all-trans-polyprenyl)benzene-1,4-diol + AH2 + O2 = a 3-demethylubiquinol + A + H2O. It participates in cofactor biosynthesis; ubiquinone biosynthesis. Functionally, catalyzes the hydroxylation of 2-nonaprenyl-3-methyl-6-methoxy-1,4-benzoquinol during ubiquinone biosynthesis. The polypeptide is 3-demethoxyubiquinol 3-hydroxylase (Xanthomonas euvesicatoria pv. vesicatoria (strain 85-10) (Xanthomonas campestris pv. vesicatoria)).